Consider the following 154-residue polypeptide: Large ribosomal subunit protein uL13 (154 aa).

Belongs to the universal ribosomal protein uL13 family. In terms of assembly, part of the 50S ribosomal subunit.

Functionally, this protein is one of the early assembly proteins of the 50S ribosomal subunit, although it is not seen to bind rRNA by itself. It is important during the early stages of 50S assembly. The chain is Large ribosomal subunit protein uL13 from Borrelia garinii subsp. bavariensis (strain ATCC BAA-2496 / DSM 23469 / PBi) (Borreliella bavariensis).